A 427-amino-acid polypeptide reads, in one-letter code: Glucose-6-phosphate isomerase (427 aa).

The active-site Proton donor is the E277. Catalysis depends on residues H298 and K414.

This sequence belongs to the GPI family.

It localises to the cytoplasm. It carries out the reaction alpha-D-glucose 6-phosphate = beta-D-fructose 6-phosphate. It functions in the pathway carbohydrate biosynthesis; gluconeogenesis. It participates in carbohydrate degradation; glycolysis; D-glyceraldehyde 3-phosphate and glycerone phosphate from D-glucose: step 2/4. Functionally, catalyzes the reversible isomerization of glucose-6-phosphate to fructose-6-phosphate. This is Glucose-6-phosphate isomerase from Mycoplasma mycoides subsp. mycoides SC (strain CCUG 32753 / NCTC 10114 / PG1).